The sequence spans 122 residues: Small ribosomal subunit protein uS13 (122 aa).

Residues 93–122 are disordered; sequence RRGLPVRGQRTKTNARTRKGPKKTVAGKKK.

It belongs to the universal ribosomal protein uS13 family. In terms of assembly, part of the 30S ribosomal subunit. Forms a loose heterodimer with protein S19. Forms two bridges to the 50S subunit in the 70S ribosome.

In terms of biological role, located at the top of the head of the 30S subunit, it contacts several helices of the 16S rRNA. In the 70S ribosome it contacts the 23S rRNA (bridge B1a) and protein L5 of the 50S subunit (bridge B1b), connecting the 2 subunits; these bridges are implicated in subunit movement. Contacts the tRNAs in the A and P-sites. This is Small ribosomal subunit protein uS13 from Micrococcus luteus (strain ATCC 4698 / DSM 20030 / JCM 1464 / CCM 169 / CCUG 5858 / IAM 1056 / NBRC 3333 / NCIMB 9278 / NCTC 2665 / VKM Ac-2230) (Micrococcus lysodeikticus).